Consider the following 139-residue polypeptide: Immunogenic miracidial antigen 8I (139 aa).

Residues 61–139 form a disordered region; the sequence is IDVGDEDYHD…PKKYGSGYKH (79 aa). Residues 64–85 show a composition bias toward acidic residues; the sequence is GDEDYHDGDDDVDYTDDVDDVD. A compositionally biased stretch (polar residues) spans 90 to 103; it reads SPSQLLQGGYQRNQ.

The protein belongs to the immunogenic miracidial antigen family.

The sequence is that of Immunogenic miracidial antigen 8I (8I) from Schistosoma japonicum (Blood fluke).